We begin with the raw amino-acid sequence, 704 residues long: Rabphilin-3A (704 aa).

Residues 1–12 (MTDTVFSSSSSR) show a composition bias toward polar residues. Residues 1-52 (MTDTVFSSSSSRWMCPSDRPLQSNDKEQLQTGWSVHPSGQPDRQRKQEELTD) form a disordered region. The region spanning 44–161 (QRKQEELTDE…KRSGAWFFKG (118 aa)) is the RabBD domain. The FYVE-type zinc finger occupies 92 to 149 (GDGVNRCILCGEQLGMLGSACVVCEDCKKNVCTKCGVETSNNRPHPVWLCKICIEQRE). Zn(2+) is bound by residues cysteine 98, cysteine 101, cysteine 115, cysteine 118, cysteine 123, cysteine 126, cysteine 141, and cysteine 144. Residues 167 to 398 (LPQPMPIKKN…EEEANSYDSD (232 aa)) form a disordered region. The span at 205-214 (TRGDTEDRRG) shows a compositional bias: basic and acidic residues. Omega-N-methylarginine is present on arginine 229. At serine 277 the chain carries Phosphoserine. Over residues 279-290 (QASRPAPASMQS) the composition is skewed to low complexity. A compositionally biased stretch (pro residues) spans 291–310 (PAPPQPGQPGPPGGSRPSPG). Low complexity predominate over residues 366-380 (QASAAAPQPVVASAR). The span at 385 to 398 (PEEDEEEANSYDSD) shows a compositional bias: acidic residues. The C2 1 domain maps to 402 to 524 (TLGALEFSLL…KPNQRKNFNI (123 aa)). Residues methionine 432, aspartate 433, aspartate 439, aspartate 494, glutamate 495, aspartate 496, glutamate 502, glutamate 549, aspartate 591, aspartate 597, aspartate 651, tyrosine 652, aspartate 653, and aspartate 659 each coordinate Ca(2+). Residues 560 to 693 (ERGKILVSLM…NKDKKIERWH (134 aa)) enclose the C2 2 domain. 2 positions are modified to phosphoserine: serine 702 and serine 703.

In terms of assembly, interacts with RAB3B, RAB3C, RAB3D, RAB8A, RAB27A and RAB27B. Interacts with RAB3A; this interaction recruits RPH3A to synaptic vesicules. Interacts (via C2B domain) with SNAP25. Interacts with deubiquitinating enzyme CAND1; this interaction results in the deubiquitination of RPH3A. Interacts with GRIN2A and DLG4; this ternary complex regulates NMDA receptor composition at postsynaptic membranes. Interacts with SNCA. The cofactor is Ca(2+). Post-translationally, ubiquitinated. Deubiquitinated by CAND1 to prevent its degradation. Specifically expressed in brain.

The protein localises to the cytoplasmic vesicle. Its subcellular location is the secretory vesicle. The protein resides in the synaptic vesicle membrane. It is found in the cell projection. It localises to the dendritic spine. The protein localises to the postsynaptic cell membrane. Its subcellular location is the membrane. In terms of biological role, plays an essential role in docking and fusion steps of regulated exocytosis. At the presynaptic level, RPH3A is recruited by RAB3A to the synaptic vesicle membrane in a GTP-dependent manner where it modulates synaptic vesicle trafficking and calcium-triggered neurotransmitter release. In the post-synaptic compartment, forms a ternary complex with GRIN2A and DLG4 and regulates NMDA receptor stability. Also plays a role in the exocytosis of arginine vasopressin hormone. The polypeptide is Rabphilin-3A (RPH3A) (Bos taurus (Bovine)).